We begin with the raw amino-acid sequence, 53 residues long: UPF0391 membrane protein YtjA (53 aa).

The next 2 membrane-spanning stretches (helical) occupy residues 4 to 24 and 30 to 48; these read WGII…GGLA and AAKI…SLFM.

This sequence belongs to the UPF0391 family.

It is found in the cell membrane. This is UPF0391 membrane protein YtjA from Escherichia coli O6:K15:H31 (strain 536 / UPEC).